The primary structure comprises 37 residues: Protease 2 large chain (37 aa).

The segment covering 1–14 (NDGNGRDSDPHDPG) has biased composition (basic and acidic residues). The disordered stretch occupies residues 1-37 (NDGNGRDSDPHDPGDWTTAGQCGLWQPARNSQHWTLV). Residues 28-37 (ARNSQHWTLV) show a composition bias toward polar residues.

It belongs to the peptidase S8 family. In terms of assembly, heterodimer of a large and a small chain.

It is found in the secreted. The protein is Protease 2 large chain of Achromobacter lyticus.